The primary structure comprises 230 residues: UPF0688 protein C1orf174 homolog (230 aa).

2 disordered regions span residues 1–85 and 97–166; these read MRSR…SLPK and AEDS…VRAS. A compositionally biased stretch (low complexity) spans 11–30; it reads RSSARLRARSYSSASLASAR. The span at 31–48 shows a compositional bias: polar residues; sequence DVTSSTSAKTTCLASSSH. The segment covering 49–78 has biased composition (basic and acidic residues); sequence KATDRRTSKKFKYDKGHLVKAELQKLDPKS. The residue at position 180 (Ser180) is a Phosphoserine.

This sequence belongs to the UPF0688 family.

It is found in the nucleus. The polypeptide is UPF0688 protein C1orf174 homolog (Mus musculus (Mouse)).